Consider the following 1103-residue polypeptide: MFLAPWPFSHLMLWFVTLGRQRGQHGLASFKLLWCLWLLVLMSLPLQVWAPPYKIGVVGPWTCDPLFSKALPEIAAQLATERINKDPALDLGHSLEYVIFNEDCQASRALSSFISHHQMASGFIGPANPGYCEAASLLGNSWDKGIFSWACVNYELDSKNSHPTFSRTLPSPIRVLLTVMKYFQWAHAGVISSDEDIWVHTAYRVASALRSRGLPVGVVLTTGQDSQSIQKALQQIRQADRIRIIIMCMHSTLIGGETQTHLLEWAHDLQMTDGTYVFVPYDTLLYSLPYKHTPYKVLRNNPKLREAYDAVLTITVESQEKTFYQAFEEAAARGEIPEKLESDQVSPLFGTIYNSIYFIAQAMNNAMKENGWASAASLVQHSRNVQFYGFNQLIRTDANGNGISEYVILDTNWKEWELHSTYTVDMETELLRFGETPIHFPGGRPPRADAQCWFADGRICQGGINPTFALMVCLALLIALLSINGFAYFIRHRINKIQLIKGPNRILLTLEDVTFINPHFGSKRGSHASVSFQITSEVQSGRSPRLSFSSGSLTPATCENSNIAIYEGDWVWLKKFPSGNFGDIKSVESSASDIFEMMKDLRHENINPLVGFFYDSGVFAIVTEFCSRRSLEDILMNQDVKLDWMFKSSLLLDLIKGMKYLHHREFAHGRLKSRNCVVDGRFVLKVTDYGFNDILETLRLSQEEPSAEELLWTAPELLRAPRGSRLRSFAGDVYSFAIIMQEVMVRGTPFCMMDLPAKEIIERIKKPPPVYRPVVPPEHAPPECLQLMKQCWAEAAEQRPTFDEIFNQFKTFNKGKKTNIIDSMLRMLEQYSSNLEDLIQERTEELEIEKQKTEKLLTQMLPPSVAESLKKGCTVEPEGFDLVTLYFSDIVGFTTISAMSEPIEVVDLLNDLYTLFDAIIGSHDVYKVETIGDAYMVASGLPKRNGMRHAAEIANMSLDILSSVGTFKMRHMPEVPVRIRIGLHSGPVVAGVVGLTMPRYCLFGDTVNTASRMESTGLPYRIHVSHSTVTILRTLGEGYEVELRGRTELKGKGTEETFWLVGKKGFTKPLPVPPPVGKDGQVGHGLQSVEIAAFQRRKQKSSW.

The N-terminal stretch at 1-46 (MFLAPWPFSHLMLWFVTLGRQRGQHGLASFKLLWCLWLLVLMSLPL) is a signal peptide. Residues 47–465 (QVWAPPYKIG…DGRICQGGIN (419 aa)) are Extracellular-facing. An intrachain disulfide couples Cys104 to Cys132. Residues 466–490 (PTFALMVCLALLIALLSINGFAYFI) traverse the membrane as a helical segment. Topologically, residues 491–1103 (RHRINKIQLI…FQRRKQKSSW (613 aa)) are cytoplasmic. The Protein kinase domain maps to 532-812 (FQITSEVQSG…DEIFNQFKTF (281 aa)). In terms of domain architecture, Guanylate cyclase spans 884 to 1014 (TLYFSDIVGF…DTVNTASRME (131 aa)).

This sequence belongs to the adenylyl cyclase class-4/guanylyl cyclase family. In terms of assembly, homodimer. Interacts with RD3; promotes the exit of GUCY2F from the endoplasmic reticulum and its trafficking to the photoreceptor outer segments. In terms of processing, there are 9 conserved cysteine residues in sensory guanylate cyclases, 6 in the extracellular domain, which may be involved in intra- or interchain disulfide bonds. As to expression, expressed specifically in retina.

It is found in the membrane. It localises to the photoreceptor outer segment membrane. The catalysed reaction is GTP = 3',5'-cyclic GMP + diphosphate. With respect to regulation, activated by GUCA1B when free calcium ions concentration is low, and inhibited by GUCA1B when free calcium ions concentration is high. Inhibited by RD3. In terms of biological role, responsible for the synthesis of cyclic GMP (cGMP) in rods and cones of photoreceptors. Plays an essential role in phototransduction, by mediating cGMP replenishment. May also participate in the trafficking of membrane-asociated proteins to the photoreceptor outer segment membrane. The sequence is that of Retinal guanylyl cyclase 2 (GUCY2F) from Bos taurus (Bovine).